A 170-amino-acid chain; its full sequence is Putative pre-16S rRNA nuclease (170 aa).

Residues 1 to 29 (MVAASHRSPDRPGDPEGLEPGTGRGRRLG) are disordered.

This sequence belongs to the YqgF nuclease family.

The protein resides in the cytoplasm. In terms of biological role, could be a nuclease involved in processing of the 5'-end of pre-16S rRNA. This Mycobacterium ulcerans (strain Agy99) protein is Putative pre-16S rRNA nuclease.